Reading from the N-terminus, the 1375-residue chain is DNA-directed RNA polymerase subunit beta (1375 aa).

It belongs to the RNA polymerase beta chain family. In terms of assembly, the RNAP catalytic core consists of 2 alpha, 1 beta, 1 beta' and 1 omega subunit. When a sigma factor is associated with the core the holoenzyme is formed, which can initiate transcription.

It carries out the reaction RNA(n) + a ribonucleoside 5'-triphosphate = RNA(n+1) + diphosphate. Its function is as follows. DNA-dependent RNA polymerase catalyzes the transcription of DNA into RNA using the four ribonucleoside triphosphates as substrates. The sequence is that of DNA-directed RNA polymerase subunit beta from Oleidesulfovibrio alaskensis (strain ATCC BAA-1058 / DSM 17464 / G20) (Desulfovibrio alaskensis).